Consider the following 604-residue polypeptide: Protein hemingway (604 aa).

4 disordered regions span residues 1–70, 103–309, 359–387, and 544–585; these read MSGA…GNPH, NQLS…PTSQ, SDRR…GGGI, and TIKA…IDLD. Composition is skewed to acidic residues over residues 8–38, 135–183, 194–214, and 288–300; these read SDEE…YIEP, EDEA…DDAQ, DDSD…EDEP, and EEPE…EENQ. Residues 368 to 379 show a composition bias toward low complexity; that stretch reads EMSSMTETTMTS.

The protein belongs to the CFAP97 family. As to expression, detected in ciliated sensory neurons at all stages of development, and in adult testis.

It localises to the cell projection. Its subcellular location is the cilium. The protein resides in the perikaryon. It is found in the cytoplasm. Involved in assembly and/or maintenance of motile cilia. Required during spermatogenesis for axoneme elongation. Necessary for optimal function of the chordotonal (hearing) organs. In Drosophila melanogaster (Fruit fly), this protein is Protein hemingway.